We begin with the raw amino-acid sequence, 729 residues long: Catalase-peroxidase (729 aa).

Residues 95-218 (WHSAGTYRGA…LAAVEMGLVY (124 aa)) constitute a cross-link (tryptophyl-tyrosyl-methioninium (Trp-Tyr) (with M-244)). The active-site Proton acceptor is the His-96. Positions 218-244 (YVNPEGPHGHPDPVASGPDVRDTFARM) form a cross-link, tryptophyl-tyrosyl-methioninium (Tyr-Met) (with W-95). A heme b-binding site is contributed by His-259.

Belongs to the peroxidase family. Peroxidase/catalase subfamily. As to quaternary structure, homodimer or homotetramer. Heme b serves as cofactor. Post-translationally, formation of the three residue Trp-Tyr-Met cross-link is important for the catalase, but not the peroxidase activity of the enzyme.

The catalysed reaction is H2O2 + AH2 = A + 2 H2O. It catalyses the reaction 2 H2O2 = O2 + 2 H2O. In terms of biological role, bifunctional enzyme with both catalase and broad-spectrum peroxidase activity. The protein is Catalase-peroxidase of Synechococcus sp. (strain CC9605).